Reading from the N-terminus, the 274-residue chain is uncharacterized protein (274 aa).

This sequence belongs to the class IV-like SAM-binding methyltransferase superfamily. RNA methyltransferase TrmH family.

This is an uncharacterized protein from Synechocystis sp. (strain ATCC 27184 / PCC 6803 / Kazusa).